Reading from the N-terminus, the 240-residue chain is Superoxide dismutase [Cu-Zn] (240 aa).

Residues 1-32 (MPKPADHRNHAAVSTSVLSALFLGAGAALLSA) form the signal peptide. The N-palmitoyl cysteine moiety is linked to residue cysteine 33. Cysteine 33 carries the S-diacylglycerol cysteine lipid modification. 2 stretches are compositionally biased toward polar residues: residues 36–51 (PQHA…SIWT) and 68–77 (GAQSLTSTLT). A disordered region spans residues 36 to 77 (PQHASTVPGTTPSIWTGSPAPSGLSGHDEESPGAQSLTSTLT). Cu cation contacts are provided by histidine 116 and histidine 118. An intrachain disulfide couples cysteine 123 to cysteine 234. Positions 146 and 158 each coordinate Zn(2+). Histidine 195 contributes to the Cu cation binding site.

This sequence belongs to the Cu-Zn superoxide dismutase family. Cu cation serves as cofactor. The cofactor is Zn(2+).

The protein localises to the cell membrane. It catalyses the reaction 2 superoxide + 2 H(+) = H2O2 + O2. With respect to regulation, inhibited by the copper chelator diethyl dithiocarbamate. Its function is as follows. Destroys radicals which are normally produced within the cells and which are toxic to biological systems. May play a role in favoring mycobacterial survival in phagocytes. The polypeptide is Superoxide dismutase [Cu-Zn] (sodC) (Mycobacterium bovis (strain ATCC BAA-935 / AF2122/97)).